Reading from the N-terminus, the 413-residue chain is Multifunctional CCA protein (413 aa).

Residues Gly8 and Arg11 each coordinate ATP. 2 residues coordinate CTP: Gly8 and Arg11. 2 residues coordinate Mg(2+): Glu21 and Asp23. Positions 91, 137, and 140 each coordinate ATP. Residues Arg91, Arg137, and Arg140 each coordinate CTP. The HD domain maps to 228-329 (CGIHTLMSLR…WRLLQRLDVL (102 aa)).

It belongs to the tRNA nucleotidyltransferase/poly(A) polymerase family. Bacterial CCA-adding enzyme type 1 subfamily. In terms of assembly, monomer. Can also form homodimers and oligomers. Mg(2+) is required as a cofactor. Ni(2+) serves as cofactor.

The enzyme catalyses a tRNA precursor + 2 CTP + ATP = a tRNA with a 3' CCA end + 3 diphosphate. It carries out the reaction a tRNA with a 3' CCA end + 2 CTP + ATP = a tRNA with a 3' CCACCA end + 3 diphosphate. Catalyzes the addition and repair of the essential 3'-terminal CCA sequence in tRNAs without using a nucleic acid template. Adds these three nucleotides in the order of C, C, and A to the tRNA nucleotide-73, using CTP and ATP as substrates and producing inorganic pyrophosphate. tRNA 3'-terminal CCA addition is required both for tRNA processing and repair. Also involved in tRNA surveillance by mediating tandem CCA addition to generate a CCACCA at the 3' terminus of unstable tRNAs. While stable tRNAs receive only 3'-terminal CCA, unstable tRNAs are marked with CCACCA and rapidly degraded. The chain is Multifunctional CCA protein from Acinetobacter baylyi (strain ATCC 33305 / BD413 / ADP1).